A 556-amino-acid chain; its full sequence is Urocanate hydratase (556 aa).

NAD(+) contacts are provided by residues 52 to 53 (GG), Q130, 176 to 178 (GMG), E196, R201, 242 to 243 (NA), 263 to 267 (QTSAH), 273 to 274 (YL), and Y322. Residue C410 is part of the active site. G492 lines the NAD(+) pocket.

It belongs to the urocanase family. NAD(+) is required as a cofactor.

The protein localises to the cytoplasm. It carries out the reaction 4-imidazolone-5-propanoate = trans-urocanate + H2O. Its pathway is amino-acid degradation; L-histidine degradation into L-glutamate; N-formimidoyl-L-glutamate from L-histidine: step 2/3. Functionally, catalyzes the conversion of urocanate to 4-imidazolone-5-propionate. This chain is Urocanate hydratase, found in Shewanella piezotolerans (strain WP3 / JCM 13877).